A 438-amino-acid chain; its full sequence is Aspartic proteinase nepenthesin-2 (438 aa).

A signal peptide spans 1–24; the sequence is MASPLYSVVLGLAIVSAIVAPTSS. Residues 25-79 constitute a propeptide, activation peptide; sequence TSRGTLLHHGQKRPQPGLRVDLEQVDSGKNLTKYELIKRAIKRGERRMRSINAML. An N-linked (GlcNAc...) asparagine glycan is attached at asparagine 54. A Peptidase A1 domain is found at 96–431; the sequence is YLMNVAIGTP…DLQNLAVSFV (336 aa). The active site involves aspartate 114. Intrachain disulfides connect cysteine 124–cysteine 127, cysteine 130–cysteine 204, cysteine 151–cysteine 169, cysteine 156–cysteine 164, cysteine 241–cysteine 435, and cysteine 354–cysteine 395. Residue aspartate 315 is part of the active site.

Belongs to the peptidase A1 family.

The protein localises to the secreted. It carries out the reaction Similar to pepsin, but also cleaves on either side of Asp and at Lys-|-Arg.. Its activity is regulated as follows. Inhibited by pepstatin and by diazoacetyl-D,L-norleucine methyl ester (DAN) in the presence of Cu(2+) ions. In terms of biological role, extracellular proteinase found in the pitcher fluid of carnivorous plants. Digest prey for nitrogen uptake. In Nepenthes gracilis (Slender pitcher plant), this protein is Aspartic proteinase nepenthesin-2 (nep2).